The sequence spans 63 residues: Cecropin-C (63 aa).

The N-terminal stretch at 1-23 (MNFYKIFVFVALILAISIGQSEA) is a signal peptide. Arg62 is modified (arginine amide).

This sequence belongs to the cecropin family.

It localises to the secreted. In terms of biological role, cecropins have lytic and antibacterial activity against several Gram-positive and Gram-negative bacteria. In Drosophila mauritiana (Fruit fly), this protein is Cecropin-C (CecC).